The chain runs to 630 residues: Putative F-box/LRR-repeat protein At3g49150 (630 aa).

An F-box domain is found at 15–63 (KDIISDLPEALICHILSFLPIEDSALTSVLSKKWQHLFAFRPNLEFDDA). LRR repeat units lie at residues 101–129 (CRDF…DLRC), 152–178 (RIET…YLNK), 180–205 (LLRH…FIMN), 228–253 (CEDV…VYHD), 300–325 (ISNV…QIPV), 337–362 (DQKA…IFDG), 406–436 (CDDY…KLFY), 437–465 (DTQI…FNAR), and 567–590 (DSSI…GLNW).

This chain is Putative F-box/LRR-repeat protein At3g49150, found in Arabidopsis thaliana (Mouse-ear cress).